A 328-amino-acid polypeptide reads, in one-letter code: Stress response kinase A (328 aa).

Asp-201 serves as the catalytic Proton acceptor. Residues Asn-206 and Asp-217 each contribute to the Mg(2+) site. Asp-217 is an active-site residue.

It belongs to the SrkA/RdoA protein kinase family. Monomer. Mg(2+) serves as cofactor.

It localises to the cytoplasm. It carries out the reaction L-seryl-[protein] + ATP = O-phospho-L-seryl-[protein] + ADP + H(+). The enzyme catalyses L-threonyl-[protein] + ATP = O-phospho-L-threonyl-[protein] + ADP + H(+). Functionally, a protein kinase that phosphorylates Ser and Thr residues. Probably acts to suppress the effects of stress linked to accumulation of reactive oxygen species. Probably involved in the extracytoplasmic stress response. This Salmonella choleraesuis (strain SC-B67) protein is Stress response kinase A.